A 572-amino-acid chain; its full sequence is Moesin (572 aa).

The region spanning 1 to 294 is the FERM domain; that stretch reads MPRGVAVRVT…GNHELYMRRR (294 aa). Disordered stretches follow at residues 444–508 and 523–544; these read SQER…SYLP and LQAMKDESKGEDRYDKIHQENI. A compositionally biased stretch (low complexity) spans 454-475; sequence AQEAAAAQHAAQLAAQREAQQL. Over residues 480-502 the composition is skewed to acidic residues; sequence EGEEDEQDHELEVQQDDNDDLDD. Over residues 525–544 the composition is skewed to basic and acidic residues; that stretch reads AMKDESKGEDRYDKIHQENI.

The protein localises to the cell membrane. It is found in the cytoplasm. Its subcellular location is the cytoskeleton. The protein resides in the cell projection. Probably involved in connections of major cytoskeletal structures to the plasma membrane. This chain is Moesin, found in Lytechinus variegatus (Green sea urchin).